The following is a 322-amino-acid chain: Agmatinase (322 aa).

Positions 136, 160, 162, 164, 243, and 245 each coordinate Mn(2+).

It belongs to the arginase family. Agmatinase subfamily. Mn(2+) is required as a cofactor.

The enzyme catalyses agmatine + H2O = urea + putrescine. Its pathway is amine and polyamine biosynthesis; putrescine biosynthesis via agmatine pathway; putrescine from agmatine: step 1/1. Its function is as follows. Catalyzes the formation of putrescine from agmatine. In Chromobacterium violaceum (strain ATCC 12472 / DSM 30191 / JCM 1249 / CCUG 213 / NBRC 12614 / NCIMB 9131 / NCTC 9757 / MK), this protein is Agmatinase.